A 436-amino-acid chain; its full sequence is Trigger factor (436 aa).

One can recognise a PPIase FKBP-type domain in the interval 161-255 (DDVAIIDFKT…VKEVREKQLP (95 aa)).

It belongs to the FKBP-type PPIase family. Tig subfamily.

The protein localises to the cytoplasm. The enzyme catalyses [protein]-peptidylproline (omega=180) = [protein]-peptidylproline (omega=0). Involved in protein export. Acts as a chaperone by maintaining the newly synthesized protein in an open conformation. Functions as a peptidyl-prolyl cis-trans isomerase. The polypeptide is Trigger factor (Akkermansia muciniphila (strain ATCC BAA-835 / DSM 22959 / JCM 33894 / BCRC 81048 / CCUG 64013 / CIP 107961 / Muc)).